We begin with the raw amino-acid sequence, 233 residues long: Large ribosomal subunit protein uL1 (233 aa).

Belongs to the universal ribosomal protein uL1 family. In terms of assembly, part of the 50S ribosomal subunit.

Its function is as follows. Binds directly to 23S rRNA. The L1 stalk is quite mobile in the ribosome, and is involved in E site tRNA release. In terms of biological role, protein L1 is also a translational repressor protein, it controls the translation of the L11 operon by binding to its mRNA. The polypeptide is Large ribosomal subunit protein uL1 (Shewanella oneidensis (strain ATCC 700550 / JCM 31522 / CIP 106686 / LMG 19005 / NCIMB 14063 / MR-1)).